Consider the following 175-residue polypeptide: MDTELVEMLKQTGAVKFGDFTLSSGRKSTYYVDKYIFETNPVCLSVIGDRIAKLIPAGTRRLAGIEIGSIPLAAVASVKSGMPFVVVRKATKGYGTNKLIEGVWQKGEKVFVVEDVVTTARGALGAIHTLREAGLAVDEMVCVVDREEGGRESLEQEGVKVRSLVKSSELLGYKP.

Residues Arg88, Lys89, Lys92, and Glu114–Gly122 contribute to the 5-phospho-alpha-D-ribose 1-diphosphate site. The orotate site is built by Thr118 and Arg146.

It belongs to the purine/pyrimidine phosphoribosyltransferase family. PyrE subfamily. As to quaternary structure, homodimer. Mg(2+) is required as a cofactor.

It catalyses the reaction orotidine 5'-phosphate + diphosphate = orotate + 5-phospho-alpha-D-ribose 1-diphosphate. It participates in pyrimidine metabolism; UMP biosynthesis via de novo pathway; UMP from orotate: step 1/2. Its function is as follows. Catalyzes the transfer of a ribosyl phosphate group from 5-phosphoribose 1-diphosphate to orotate, leading to the formation of orotidine monophosphate (OMP). In Methanocella arvoryzae (strain DSM 22066 / NBRC 105507 / MRE50), this protein is Orotate phosphoribosyltransferase.